Consider the following 233-residue polypeptide: Uridylate kinase (233 aa).

Residues 8–11 (KLSG), G51, and R55 contribute to the ATP site. UMP contacts are provided by residues D68 and 129 to 136 (TSNPFFTT). The ATP site is built by T156, Y162, and D165.

Belongs to the UMP kinase family. Homohexamer.

Its subcellular location is the cytoplasm. It carries out the reaction UMP + ATP = UDP + ADP. Its pathway is pyrimidine metabolism; CTP biosynthesis via de novo pathway; UDP from UMP (UMPK route): step 1/1. Its activity is regulated as follows. Inhibited by UTP. Catalyzes the reversible phosphorylation of UMP to UDP. This chain is Uridylate kinase, found in Thermosipho melanesiensis (strain DSM 12029 / CIP 104789 / BI429).